A 299-amino-acid polypeptide reads, in one-letter code: MITFLPIIFSILVVVTFVIGNFANGFIALVNSTEWVKRQKISFADQIVTALAVSRVGLLWVLLLNWYSTVLNPAFCSVELRTTAYNIWAVTGHFSNWPATSLSIFYLLKIANFSNLIFLRLKRRVKSVILVVLLGPLLFLACHLFVVNMNQIVWTKEYEGNMTWKIKLRRAMYLSDTTVTMLANLVPFTVTLISFLLLVCSLCKHLKKMQLHGKGSQDPSTKVHIKVLQTVISFFLLRAIYFVSVIISVWSFKNLENKPVFMFCQAIGFSCSSAHPFILIWGNKKLKQTYLSVLWQMRY.

Position 1 (Met1) is a topological domain, extracellular. Residues 2-22 (ITFLPIIFSILVVVTFVIGNF) form a helical membrane-spanning segment. The Cytoplasmic segment spans residues 23-55 (ANGFIALVNSTEWVKRQKISFADQIVTALAVSR). Residues 56-76 (VGLLWVLLLNWYSTVLNPAFC) traverse the membrane as a helical segment. At 77-98 (SVELRTTAYNIWAVTGHFSNWP) the chain is on the extracellular side. The helical transmembrane segment at 99 to 119 (ATSLSIFYLLKIANFSNLIFL) threads the bilayer. The Cytoplasmic portion of the chain corresponds to 120–126 (RLKRRVK). The chain crosses the membrane as a helical span at residues 127 to 147 (SVILVVLLGPLLFLACHLFVV). Over 148–178 (NMNQIVWTKEYEGNMTWKIKLRRAMYLSDTT) the chain is Extracellular. N-linked (GlcNAc...) asparagine glycosylation is present at Asn161. A helical membrane pass occupies residues 179–199 (VTMLANLVPFTVTLISFLLLV). Topologically, residues 200-229 (CSLCKHLKKMQLHGKGSQDPSTKVHIKVLQ) are cytoplasmic. Residues 230 to 250 (TVISFFLLRAIYFVSVIISVW) form a helical membrane-spanning segment. At 251-259 (SFKNLENKP) the chain is on the extracellular side. A helical transmembrane segment spans residues 260–280 (VFMFCQAIGFSCSSAHPFILI). The Cytoplasmic portion of the chain corresponds to 281–299 (WGNKKLKQTYLSVLWQMRY).

It belongs to the G-protein coupled receptor T2R family. In terms of tissue distribution, expressed in subsets of taste receptor cells of the tongue and exclusively in gustducin-positive cells.

The protein resides in the membrane. Its function is as follows. Receptor that may play a role in the perception of bitterness and is gustducin-linked. May play a role in sensing the chemical composition of the gastrointestinal content. The activity of this receptor may stimulate alpha gustducin, mediate PLC-beta-2 activation and lead to the gating of TRPM5. The polypeptide is Taste receptor type 2 member 45 (TAS2R45) (Homo sapiens (Human)).